We begin with the raw amino-acid sequence, 804 residues long: Endoplasmin (804 aa).

The first 21 residues, 1–21 (MRALWVLGLCCVLLTFGSVRA), serve as a signal peptide directing secretion. Positions 42–44 (SRT) match the SRT pseudosubstrate motif motif. Asn62 is a glycosylation site (N-linked (GlcNAc...) asparagine). Ser64 is modified (phosphoserine). A glycan (N-linked (GlcNAc...) asparagine) is linked at Asn107. ATP is bound by residues Asn107, Asp149, and Asn162. N6-(2-hydroxyisobutyryl)lysine is present on Lys168. Ser172 is modified (phosphoserine). Phe199 provides a ligand contact to ATP. The N-linked (GlcNAc...) asparagine glycan is linked to Asn217. A disordered region spans residues 288 to 323 (TVEEPMEEEEAAKEEKEESDDEAAVEEEEEEKKPKT). Acidic residues predominate over residues 289 to 317 (VEEPMEEEEAAKEEKEESDDEAAVEEEEE). Phosphoserine is present on residues Ser306 and Ser403. N6-succinyllysine is present on Lys404. Asn445 carries an N-linked (GlcNAc...) asparagine glycan. Phosphoserine is present on Ser447. Lys479 carries the N6-acetyllysine modification. Asn481 and Asn502 each carry an N-linked (GlcNAc...) asparagine glycan. Lys633 bears the N6-succinyllysine mark. The tract at residues 750–804 (DPDAKVEEEPEEEPEETTEDTTEDTEQDDDEEMDAGADEEEQETSETSTAEKDEL) is disordered. Residues 757–793 (EEPEEEPEETTEDTTEDTEQDDDEEMDAGADEEEQET) show a composition bias toward acidic residues. The Prevents secretion from ER signature appears at 801–804 (KDEL).

It belongs to the heat shock protein 90 family. As to quaternary structure, homodimer; disulfide-linked. Component of an EIF2 complex at least composed of CELF1/CUGBP1, CALR, CALR3, EIF2S1, EIF2S2, HSP90B1 and HSPA5. Part of a large chaperone multiprotein complex comprising DNAJB11, HSP90B1, HSPA5, HYOU, PDIA2, PDIA4, PDIA6, PPIB, SDF2L1, UGGT1 and very small amounts of ERP29, but not, or at very low levels, CALR nor CANX. Interacts with AIMP1; regulates its retention in the endoplasmic reticulum. Hyperglycosylated form interacts with OS9; promoting its degradation by the endoplasmic reticulum associated degradation (ERAD). Interacts with CNPY3. This interaction is disrupted in the presence of ATP. Interacts with TLR4 and TLR9, but not with TLR3. Interacts with MZB1 in a calcium-dependent manner. Interacts with METTL23. Interacts with IL1B; the interaction facilitates cargo translocation into the ERGIC. Interacts with EIF2AK3. Phosphorylated by CK2. In terms of processing, N-glycosylated cotranslationally at Asn-217 by STT3A-containing OST-A complex: this glycosylation is constitutive. In response to various stress, 5 additional facultative sites (Asn-62, Asn-107, Asn-445, Asn-481 and Asn-502) can be glycosylated post-translationally by STT3B-containing OST-B complex, leading to a hyperglycosylated form that is degraded by the ER-associated degradation (ERAD) pathway. In normal conditions, the OST-A complex together with CCDC134 prevent glycosylation at facultative sites during protein folding, thereby preventing hyperglycosylation. Mechanistically, nascent HSP90B1 is tethered during translation to a specialized CCDC134-containing translocon that forms a microenvironment for its folding, in which STT3A associates with the SRT pseudosubstrate motif, and prevents access to facultative glycosylation sites until folding is completed, rendering its facultative sites inaccessible to the OST-B complex.

It is found in the endoplasmic reticulum lumen. Its subcellular location is the sarcoplasmic reticulum lumen. It localises to the melanosome. The catalysed reaction is ATP + H2O = ADP + phosphate + H(+). Its function is as follows. ATP-dependent chaperone involved in the processing of proteins in the endoplasmic reticulum, regulating their transport. Together with MESD, acts as a modulator of the Wnt pathway by promoting the folding of LRP6, a coreceptor of the canonical Wnt pathway. When associated with CNPY3, required for proper folding of Toll-like receptors. Promotes folding and trafficking of TLR4 to the cell surface. May participate in the unfolding of cytosolic leaderless cargos (lacking the secretion signal sequence) such as the interleukin 1/IL-1 to facilitate their translocation into the ERGIC (endoplasmic reticulum-Golgi intermediate compartment) and secretion; the translocation process is mediated by the cargo receptor TMED10. The protein is Endoplasmin (HSP90B1) of Sus scrofa (Pig).